We begin with the raw amino-acid sequence, 864 residues long: Calphotin (864 aa).

The interval 816–858 is leucine-zipper; sequence LQTTDVSLLAIAATLDAIGEKLKDQKARNQQVMDRLCEIEKIL.

In terms of assembly, homodimer. As to expression, soma and axons of photoreceptor cells of compound eyes and ocelli.

The protein resides in the cytoplasm. In terms of biological role, plays important roles in both rhabdomere development and in photoreceptor cell survival. Might function as a calcium-sequestering 'sponge' to regulate the amount of free cytoplasmic calcium. It binds 0.3 mole of Ca(2+) per mole of protein. This Drosophila melanogaster (Fruit fly) protein is Calphotin (Cpn).